We begin with the raw amino-acid sequence, 270 residues long: Regulatory protein RecX (270 aa).

Belongs to the RecX family.

It localises to the cytoplasm. Functionally, modulates RecA activity. This Bacillus thuringiensis subsp. konkukian (strain 97-27) protein is Regulatory protein RecX.